A 278-amino-acid chain; its full sequence is Keratin-associated protein 5-1 (278 aa).

8 consecutive repeat copies span residues 42–45 (CCVP), 48–51 (CCKP), 130–133 (CCVP), 136–139 (CCKP), 142–145 (CCVP), 239–242 (CCKP), 258–261 (CCKP), and 268–271 (CCVP). Residues 42–271 (CCVPVCCCKP…CCSQSSCCVP (230 aa)) are 8 X 4 AA repeats of C-C-X-P.

It belongs to the KRTAP type 5 family. Interacts with hair keratins. As to expression, expressed in hair root but not in skin. Expressed also in lung, pancreas, ovary, testis.

In the hair cortex, hair keratin intermediate filaments are embedded in an interfilamentous matrix, consisting of hair keratin-associated protein (KRTAP), which are essential for the formation of a rigid and resistant hair shaft through their extensive disulfide bond cross-linking with abundant cysteine residues of hair keratins. The matrix proteins include the high-sulfur and high-glycine-tyrosine keratins. The protein is Keratin-associated protein 5-1 (KRTAP5-1) of Homo sapiens (Human).